Here is a 151-residue protein sequence, read N- to C-terminus: Proline-rich acidic protein 1 (151 aa).

The N-terminal stretch at 1 to 20 (MRRLLLVTSLVVVLLWEAGA) is a signal peptide. Residues 71–151 (LTTEEKPRGQ…EDQDHIYHPQ (81 aa)) form a disordered region.

As to quaternary structure, interacts with isoform 1 and isoform 3 of MAD1L1. Interacts with MTTP. As to expression, highly expressed in the intestinal epithelial cells (at protein level). Abundantly expressed in the epithelial cells of the liver, kidney and cervix. Significantly down-regulated in hepatocellular carcinoma and right colon adenocarcinoma compared with the respective adjacent normal tissues. Expressed in epididymis (at protein level).

It is found in the secreted. It localises to the endoplasmic reticulum. In terms of biological role, lipid-binding protein which promotes lipid absorption by facilitating MTTP-mediated lipid transfer (mainly triglycerides and phospholipids) and MTTP-mediated apoB lipoprotein assembly and secretion. Protects the gastrointestinal epithelium from irradiation-induced apoptosis. May play an important role in maintaining normal growth homeostasis in epithelial cells. Involved in p53/TP53-dependent cell survival after DNA damage. May down-regulate the expression of MAD1L1 and exert a suppressive role in mitotic spindle assembly checkpoint in hepatocellular carcinomas. The sequence is that of Proline-rich acidic protein 1 (PRAP1) from Homo sapiens (Human).